The chain runs to 90 residues: Probable Fe(2+)-trafficking protein (90 aa).

Belongs to the Fe(2+)-trafficking protein family.

Could be a mediator in iron transactions between iron acquisition and iron-requiring processes, such as synthesis and/or repair of Fe-S clusters in biosynthetic enzymes. The chain is Probable Fe(2+)-trafficking protein from Bordetella avium (strain 197N).